A 338-amino-acid polypeptide reads, in one-letter code: Probable cytosolic iron-sulfur protein assembly protein Ciao1 (338 aa).

WD repeat units lie at residues 12–51, 58–97, 102–141, 147–186, 193–232, 234–252, 253–291, and 302–338; these read GHRG…RWVP, GHTR…FECN, GHEN…EYEC, THSQ…SDWS, SHDS…NEFG, ACPD…LSGF, HSRA…PANE, and AHSQ…EDDE.

This sequence belongs to the WD repeat CIA1 family.

In terms of biological role, essential component of the cytosolic iron-sulfur (Fe/S) protein assembly machinery. Required for the maturation of extramitochondrial Fe/S proteins. This is Probable cytosolic iron-sulfur protein assembly protein Ciao1 from Culex quinquefasciatus (Southern house mosquito).